We begin with the raw amino-acid sequence, 717 residues long: Trimethylamine N-oxide transport system permease protein TmoV (717 aa).

A run of 17 helical transmembrane segments spans residues 10-30 (FFQW…IEVP), 69-89 (LPPL…FLMN), 120-140 (FMTF…ETIV), 153-173 (WAEL…ILGY), 175-195 (LSGK…SVFG), 206-226 (FILV…VMAF), 238-258 (ILLV…IVLF), 265-285 (AVII…LLGL), 319-339 (ILIG…ISAF), 355-375 (QLNI…AILL), 402-422 (ILFF…GSFY), 452-472 (IWDT…VDVL), 488-508 (LVLV…LVVG), 527-547 (LYMA…VGII), 574-594 (LIPV…AVIV), 643-663 (MLGL…GAFI), and 683-703 (GIGL…DHLI). The 180-residue stretch at 200–379 (SMQTLSFILV…LIAILLDKMS (180 aa)) folds into the ABC transmembrane type-1 1 domain. The ABC transmembrane type-1 2 domain occupies 523-703 (ALVTLYMATF…FIGLIFDHLI (181 aa)).

The protein belongs to the binding-protein-dependent transport system permease family. In terms of assembly, the complex is probably composed of two ATP-binding proteins (TmoW), two transmembrane proteins (TmoV) and a solute-binding protein (TmoX).

The protein localises to the cell inner membrane. Part of the ABC transporter complex TmoXWV involved in trimethylamine N-oxide (TMAO) import. Responsible for the translocation of the substrate across the membrane. The protein is Trimethylamine N-oxide transport system permease protein TmoV of Pelagibacter ubique (strain HTCC1062).